A 289-amino-acid chain; its full sequence is RNA-binding protein CP29B, chloroplastic (289 aa).

Residues methionine 1–asparagine 62 constitute a chloroplast transit peptide. A phosphoserine mark is found at serine 6 and serine 12. At valine 63 the chain carries N-acetylvaline. The region spanning leucine 91–proline 169 is the RRM 1 domain. The tract at residues aspartate 158–glycine 199 is disordered. A linker (Gly-rich) region spans residues proline 170–glycine 203. Residues serine 178–serine 187 show a composition bias toward low complexity. Residues serine 188–glycine 199 show a composition bias toward gly residues. The RRM 2 domain maps to asparagine 204–alanine 282.

ADP-ribosylated by the Pseudomonas syringae type III effector HopU1. ADP-ribosylation reduces the ability of the protein to bind RNA. In terms of processing, phosphorylated on tyrosine residues after treatment with abscisic acid (ABA). Phosphorylation may reduce the ability of the protein to bind RNA.

The protein resides in the plastid. It localises to the chloroplast. In terms of biological role, could be involved in splicing and/or processing of chloroplast RNA's. The protein is RNA-binding protein CP29B, chloroplastic of Arabidopsis thaliana (Mouse-ear cress).